We begin with the raw amino-acid sequence, 151 residues long: Large ribosomal subunit protein uL13 (151 aa).

This sequence belongs to the universal ribosomal protein uL13 family. Part of the 50S ribosomal subunit.

In terms of biological role, this protein is one of the early assembly proteins of the 50S ribosomal subunit, although it is not seen to bind rRNA by itself. It is important during the early stages of 50S assembly. This is Large ribosomal subunit protein uL13 from Microchaete diplosiphon (Fremyella diplosiphon).